A 284-amino-acid chain; its full sequence is uncharacterized protein (284 aa).

The segment at 236 to 284 (IDITNEADSSEIIDSEPSNKDETEKPSAQETDPFDGKPVDIKDDELPFD) is disordered. 2 stretches are compositionally biased toward basic and acidic residues: residues 252–262 (PSNKDETEKPS) and 269–284 (FDGK…LPFD).

This is an uncharacterized protein from Bacillus subtilis (strain 168).